Reading from the N-terminus, the 136-residue chain is Large ribosomal subunit protein uL16c (136 aa).

The protein belongs to the universal ribosomal protein uL16 family. As to quaternary structure, part of the 50S ribosomal subunit.

It is found in the plastid. Its subcellular location is the chloroplast. This Chloranthus spicatus (Chulantree) protein is Large ribosomal subunit protein uL16c.